A 156-amino-acid chain; its full sequence is SCP2 sterol-binding domain-containing protein 1 (156 aa).

One can recognise an SCP2 domain in the interval 44–156; that stretch reads TVPVFEDISQ…ERVFKDWAKW (113 aa).

The chain is SCP2 sterol-binding domain-containing protein 1 (SCP2D1) from Bos taurus (Bovine).